The sequence spans 144 residues: Ribonuclease VapC45 (144 aa).

Mg(2+)-binding residues include D7 and D102.

This sequence belongs to the PINc/VapC protein family. Mg(2+) serves as cofactor.

Its function is as follows. Toxic component of a type II toxin-antitoxin (TA) system. An RNase. Its cognate antitoxin is VapB45. The protein is Ribonuclease VapC45 of Mycobacterium tuberculosis (strain CDC 1551 / Oshkosh).